The sequence spans 75 residues: Xibalbin-13 2 (75 aa).

An N-terminal signal peptide occupies residues 1-27 (MKEANTRRYIYLCLVVVLLSIIITTEA). Positions 28-30 (EDD) are excised as a propeptide. 4 disulfide bridges follow: Cys-34-Cys-49, Cys-41-Cys-54, Cys-48-Cys-65, and Cys-56-Cys-63.

It belongs to the xibalbin-13 family. Expressed by the venom gland and the whole body.

The protein resides in the secreted. Functionally, probable neurotoxin. Strongly inhibits voltage-gated potassium channels (Kv1.1/KCNA1, Kv1.2/KCNA2, Kv1.3/KCNA3, and Kv1.6/KCNA6, with the highest toxicity against Kv1.1 (85.1% inhibition at 1 uM)) and mildly inhibits sodium channels (Nav1.2/SCN2A, Nav1.4/SCN4A, Nav1.5/SCN5A, Nav1.6/SCN8A, and BgNav). Induces activation of protein kinase A type II (PKA-II) and MAP kinase Erk1/2 in primary nociceptive and non-nociceptive sensory neurons. Does not show cytotoxic activity. Does not have an impact on Ca2+, cAMP, and NO signaling in the cell types analyzed. Does not interfere with the adhesion of leukocytes to endothelial cells. This is Xibalbin-13 2 from Xibalbanus tulumensis (Blind cave remipede).